The primary structure comprises 245 residues: tRNA (guanine-N(1)-)-methyltransferase (245 aa).

Residues G113 and I133–L138 each bind S-adenosyl-L-methionine.

The protein belongs to the RNA methyltransferase TrmD family. Homodimer.

The protein resides in the cytoplasm. It catalyses the reaction guanosine(37) in tRNA + S-adenosyl-L-methionine = N(1)-methylguanosine(37) in tRNA + S-adenosyl-L-homocysteine + H(+). Specifically methylates guanosine-37 in various tRNAs. This chain is tRNA (guanine-N(1)-)-methyltransferase, found in Histophilus somni (strain 129Pt) (Haemophilus somnus).